The following is a 316-amino-acid chain: 1-aminocyclopropane-1-carboxylate oxidase 4 (316 aa).

The Fe2OG dioxygenase domain maps to 153–253; it reads PNFGTKVSNY…RMSLASFYNP (101 aa). Residues histidine 177, aspartate 179, and histidine 234 each coordinate Fe cation.

This sequence belongs to the iron/ascorbate-dependent oxidoreductase family. Fe cation serves as cofactor. As to expression, expressed in all of the floral organs examined apart from the sepals.

It catalyses the reaction 1-aminocyclopropane-1-carboxylate + L-ascorbate + O2 = ethene + L-dehydroascorbate + hydrogen cyanide + CO2 + 2 H2O. The protein operates within alkene biosynthesis; ethylene biosynthesis via S-adenosyl-L-methionine; ethylene from S-adenosyl-L-methionine: step 2/2. The chain is 1-aminocyclopropane-1-carboxylate oxidase 4 (ACO4) from Solanum lycopersicum (Tomato).